We begin with the raw amino-acid sequence, 77 residues long: uncharacterized protein (77 aa).

This is an uncharacterized protein from Bacillus licheniformis.